The chain runs to 161 residues: Inner membrane assembly complex subunit 17 (161 aa).

The transit peptide at 1-22 directs the protein to the mitochondrion; sequence MLNPRPCVPRLLSAVARCHKPY. The Mitochondrial matrix portion of the chain corresponds to 23-84; it reads STSIKSLEDL…QQQQQALKKF (62 aa). The chain crosses the membrane as a helical span at residues 85-107; sequence VRPMWIFLLMSSFFYLTGHYIWW. Over 108–161 the chain is Mitochondrial intermembrane; the sequence is KLEYDEREIELHKQVQALRQELDSAIAAKHSGKEPALSGAGAKKPKRWYLAWLW. The stretch at 109–138 forms a coiled coil; that stretch reads LEYDEREIELHKQVQALRQELDSAIAAKHS.

The protein belongs to the INA17 family. As to quaternary structure, component of the inner membrane assembly (INA) complex, composed of INA17 and INA22. Interacts with a subset of F(1)F(0)-ATP synthase subunits of the F(1)-domain and the peripheral stalk.

The protein localises to the mitochondrion inner membrane. In terms of biological role, component of the INA complex (INAC) that promotes the biogenesis of mitochondrial F(1)F(0)-ATP synthase. INAC facilitates the assembly of the peripheral stalk and promotes the assembly of the catalytic F(1)-domain with the membrane-embedded F(0)-domain. The protein is Inner membrane assembly complex subunit 17 of Lachancea thermotolerans (strain ATCC 56472 / CBS 6340 / NRRL Y-8284) (Yeast).